Reading from the N-terminus, the 376-residue chain is MTFLYITCYCVAFNRKLLVFMQMEKGKHNKGGYSSISGPQVIEKSFNDMSISCTGFGSGSGLGGLNTDTDTFTSRPKGRTSGGTTGAGKGIGMKLGNTKKTNQFLESLKAEGEVIMEDFQPCSLQSRSSPLPPSDPVTVAVEEKLNVAVKRDGGVNNFDVQGTLALLVLNDADGLILLQIESQDIPGLSFKTHPNINKDLFNSQQILGAKDPIRPFPSGQNETPLVKWRIQGMNESSLPLSVNCWPSILGNETYVNIEYEASEMFDLHSVIISIPLPALREAPRVRQIDGEWKYDSRNSVLEWSIILIDQSNRSGSMEFVVPPADPSMFYPISVGFSASNTFSNVKVTGIRPLNEGSNPPKYSQRVRLVADNYQVV.

Positions 65 to 92 (LNTDTDTFTSRPKGRTSGGTTGAGKGIG) are disordered. Over residues 80 to 92 (TSGGTTGAGKGIG) the composition is skewed to gly residues. The 243-residue stretch at 134–376 (SDPVTVAVEE…RLVADNYQVV (243 aa)) folds into the MHD domain.

This sequence belongs to the adaptor complexes medium subunit family. Delta-COP subfamily. Oligomeric complex that consists of at least the alpha, beta, beta', gamma, delta, epsilon and zeta subunits.

The protein resides in the cytoplasm. Its subcellular location is the golgi apparatus membrane. It localises to the cytoplasmic vesicle. It is found in the COPI-coated vesicle membrane. In terms of biological role, the coatomer is a cytosolic protein complex that binds to dilysine motifs and reversibly associates with Golgi non-clathrin-coated vesicles, which further mediate biosynthetic protein transport from the ER, via the Golgi up to the trans Golgi network. Coatomer complex is required for budding from Golgi membranes, and is essential for the retrograde Golgi-to-ER transport of dilysine-tagged proteins. This chain is Coatomer subunit delta-4, found in Oryza sativa subsp. japonica (Rice).